The chain runs to 265 residues: Phosphatidylglycerol--prolipoprotein diacylglyceryl transferase (265 aa).

The next 4 membrane-spanning stretches (helical) occupy residues 17-37, 56-76, 92-112, and 117-137; these read LSIRWYGLMYLIGFAAAWLLG, LVTYMVLGVVVGGRLGYMLFY, WQGGMSFHGGFLGVLAVVWFF, and GKGFWGVADFTAPLAPFGLFA. An a 1,2-diacyl-sn-glycero-3-phospho-(1'-sn-glycerol)-binding site is contributed by Arg139. Helical transmembrane passes span 173 to 193, 201 to 221, and 235 to 255; these read PSQLYEALLEGAALFLIVWLY, GAVSGVFCVCYGLFRFAVELV, and WLTMGQLLSLPVIVFGLWLLA.

The protein belongs to the Lgt family.

It localises to the cell inner membrane. It catalyses the reaction L-cysteinyl-[prolipoprotein] + a 1,2-diacyl-sn-glycero-3-phospho-(1'-sn-glycerol) = an S-1,2-diacyl-sn-glyceryl-L-cysteinyl-[prolipoprotein] + sn-glycerol 1-phosphate + H(+). It participates in protein modification; lipoprotein biosynthesis (diacylglyceryl transfer). Its function is as follows. Catalyzes the transfer of the diacylglyceryl group from phosphatidylglycerol to the sulfhydryl group of the N-terminal cysteine of a prolipoprotein, the first step in the formation of mature lipoproteins. The polypeptide is Phosphatidylglycerol--prolipoprotein diacylglyceryl transferase (Solidesulfovibrio magneticus (strain ATCC 700980 / DSM 13731 / RS-1) (Desulfovibrio magneticus)).